The following is a 113-amino-acid chain: Dolichyl-diphosphooligosaccharide--protein glycosyltransferase subunit DAD1 (113 aa).

Serine 2 is modified (N-acetylserine). The Cytoplasmic portion of the chain corresponds to 2-30 (SASVVSVISRFLEEYLSSTPQRLKLLDAY). The helical transmembrane segment at 31–51 (LLYILLTGALQFGYCLLVGTF) threads the bilayer. Residue proline 52 is a topological domain, lumenal. The chain crosses the membrane as a helical span at residues 53–73 (FNSFLSGFISCVGSFILAVRL). The Cytoplasmic portion of the chain corresponds to 74–92 (RIQINPQNKADFQGISPER). A helical membrane pass occupies residues 93–113 (AFADFLFASTILHLVVMNFVG).

Belongs to the DAD/OST2 family. Component of the oligosaccharyltransferase (OST) complex. OST exists in two different complex forms which contain common core subunits RPN1, RPN2, OST48, OST4, DAD1 and TMEM258, either STT3A or STT3B as catalytic subunits, and form-specific accessory subunits. STT3A complex assembly occurs through the formation of 3 subcomplexes. Subcomplex 1 contains RPN1 and TMEM258, subcomplex 2 contains the STT3A-specific subunits STT3A, DC2/OSTC, and KCP2 as well as the core subunit OST4, and subcomplex 3 contains RPN2, DAD1, and OST48. The STT3A complex can form stable complexes with the Sec61 complex or with both the Sec61 and TRAP complexes.

The protein localises to the endoplasmic reticulum membrane. It functions in the pathway protein modification; protein glycosylation. In terms of biological role, subunit of the oligosaccharyl transferase (OST) complex that catalyzes the initial transfer of a defined glycan (Glc(3)Man(9)GlcNAc(2) in eukaryotes) from the lipid carrier dolichol-pyrophosphate to an asparagine residue within an Asn-X-Ser/Thr consensus motif in nascent polypeptide chains, the first step in protein N-glycosylation. N-glycosylation occurs cotranslationally and the complex associates with the Sec61 complex at the channel-forming translocon complex that mediates protein translocation across the endoplasmic reticulum (ER). All subunits are required for a maximal enzyme activity. The chain is Dolichyl-diphosphooligosaccharide--protein glycosyltransferase subunit DAD1 from Pongo abelii (Sumatran orangutan).